A 472-amino-acid chain; its full sequence is Deoxyribodipyrimidine photo-lyase (472 aa).

One can recognise a Photolyase/cryptochrome alpha/beta domain in the interval 2–134; it reads TTHLVWFRQD…VCEGFDDSVI (133 aa). (6R)-5,10-methylene-5,6,7,8-tetrahydrofolate-binding residues include Asn109 and Glu110. An FAD-binding site is contributed by Tyr223. Arg227 contacts DNA. FAD contacts are provided by residues 235–239, Trp272, and 275–282; these read TSRLS and ELIWREFY. Interaction with DNA regions lie at residues 275–282 and 342–343; these read ELIWREFY and NR. Position 373–375 (373–375) interacts with FAD; the sequence is DGD. Residue Gln405 participates in DNA binding.

Belongs to the DNA photolyase class-1 family. As to quaternary structure, monomer. FAD serves as cofactor. It depends on (6R)-5,10-methylene-5,6,7,8-tetrahydrofolate as a cofactor.

The catalysed reaction is cyclobutadipyrimidine (in DNA) = 2 pyrimidine residues (in DNA).. Involved in repair of UV radiation-induced DNA damage. Catalyzes the light-dependent monomerization (300-600 nm) of cyclobutyl pyrimidine dimers (in cis-syn configuration), which are formed between adjacent bases on the same DNA strand upon exposure to ultraviolet radiation. In Escherichia coli (strain K12), this protein is Deoxyribodipyrimidine photo-lyase (phrB).